Reading from the N-terminus, the 546-residue chain is Chaperonin GroEL (546 aa).

ATP contacts are provided by residues threonine 30–proline 33, lysine 51, aspartate 87–threonine 91, glycine 415, asparagine 479–alanine 481, and aspartate 495.

Belongs to the chaperonin (HSP60) family. Forms a cylinder of 14 subunits composed of two heptameric rings stacked back-to-back. Interacts with the co-chaperonin GroES.

It localises to the cytoplasm. It carries out the reaction ATP + H2O + a folded polypeptide = ADP + phosphate + an unfolded polypeptide.. Its function is as follows. Together with its co-chaperonin GroES, plays an essential role in assisting protein folding. The GroEL-GroES system forms a nano-cage that allows encapsulation of the non-native substrate proteins and provides a physical environment optimized to promote and accelerate protein folding. In Pseudomonas putida (strain ATCC 47054 / DSM 6125 / CFBP 8728 / NCIMB 11950 / KT2440), this protein is Chaperonin GroEL.